Here is a 132-residue protein sequence, read N- to C-terminus: Small ribosomal subunit protein uS8 (132 aa).

This sequence belongs to the universal ribosomal protein uS8 family. In terms of assembly, part of the 30S ribosomal subunit. Contacts proteins S5 and S12.

Functionally, one of the primary rRNA binding proteins, it binds directly to 16S rRNA central domain where it helps coordinate assembly of the platform of the 30S subunit. This Halalkalibacterium halodurans (strain ATCC BAA-125 / DSM 18197 / FERM 7344 / JCM 9153 / C-125) (Bacillus halodurans) protein is Small ribosomal subunit protein uS8.